The chain runs to 294 residues: uncharacterized protein (294 aa).

The 139-residue stretch at 13–151 (QCSQIRPYLY…LIDLEQKLRG (139 aa)) folds into the Tyrosine-protein phosphatase domain. Cysteine 95 serves as the catalytic Phosphocysteine intermediate. Positions 234–294 (PTLLVPSSSS…WRLSFHKDVV (61 aa)) are disordered.

Belongs to the protein-tyrosine phosphatase family. Non-receptor class dual specificity subfamily.

This is an uncharacterized protein from Caenorhabditis elegans.